Consider the following 120-residue polypeptide: MFLISKYNYFWLFLLLASLIPPVASPISSYSAPVGKGPEKFTSYESGIEPIGDAWIQFQIRYYMFASVFVISDAETVSLYPWAMCFNELGVPASAEASISVTIPIVGSVYAWRRGASEWS.

3 helical membrane-spanning segments follow: residues 9–29, 64–84, and 89–109; these read YFWL…PISS, MFAS…PWAM, and LGVP…VGSV.

This sequence belongs to the complex I subunit 3 family. As to quaternary structure, NDH is composed of at least 16 different subunits, 5 of which are encoded in the nucleus.

The protein resides in the plastid. It localises to the chloroplast thylakoid membrane. The enzyme catalyses a plastoquinone + NADH + (n+1) H(+)(in) = a plastoquinol + NAD(+) + n H(+)(out). The catalysed reaction is a plastoquinone + NADPH + (n+1) H(+)(in) = a plastoquinol + NADP(+) + n H(+)(out). In terms of biological role, NDH shuttles electrons from NAD(P)H:plastoquinone, via FMN and iron-sulfur (Fe-S) centers, to quinones in the photosynthetic chain and possibly in a chloroplast respiratory chain. The immediate electron acceptor for the enzyme in this species is believed to be plastoquinone. Couples the redox reaction to proton translocation, and thus conserves the redox energy in a proton gradient. The protein is NAD(P)H-quinone oxidoreductase subunit 3, chloroplastic of Huperzia lucidula (Shining clubmoss).